The primary structure comprises 163 residues: HTH-type transcriptional regulator IscR (163 aa).

Residues 2-131 (RLTSKGRYAV…NNITLGELVN (130 aa)) form the HTH rrf2-type domain. The H-T-H motif DNA-binding region spans 28-51 (LADISERQGISLSYLEQLFSRLRK). [2Fe-2S] cluster is bound by residues C92, C98, and C104.

[2Fe-2S] cluster serves as cofactor.

Regulates the transcription of several operons and genes involved in the biogenesis of Fe-S clusters and Fe-S-containing proteins. This is HTH-type transcriptional regulator IscR from Klebsiella pneumoniae (strain 342).